Consider the following 155-residue polypeptide: Small ribosomal subunit protein uS7cz/uS7cy (155 aa).

The protein belongs to the universal ribosomal protein uS7 family. In terms of assembly, part of the 30S ribosomal subunit.

It is found in the plastid. The protein localises to the chloroplast. Its function is as follows. One of the primary rRNA binding proteins, it binds directly to 16S rRNA where it nucleates assembly of the head domain of the 30S subunit. The protein is Small ribosomal subunit protein uS7cz/uS7cy (rps7-A) of Atropa belladonna (Belladonna).